The chain runs to 164 residues: UPF0262 protein Nham_0287 (164 aa).

The protein belongs to the UPF0262 family.

This Nitrobacter hamburgensis (strain DSM 10229 / NCIMB 13809 / X14) protein is UPF0262 protein Nham_0287.